A 37-amino-acid polypeptide reads, in one-letter code: Large ribosomal subunit protein bL36c (37 aa).

Belongs to the bacterial ribosomal protein bL36 family.

The protein localises to the plastid. The chain is Large ribosomal subunit protein bL36c (rpl36) from Epifagus virginiana (Beechdrops).